Here is a 134-residue protein sequence, read N- to C-terminus: Snaclec alboaggregin-A subunit alpha' (134 aa).

A C-type lectin domain is found at 1 to 134; sequence DFHCLPGWSA…NPFVCKFPPQ (134 aa). Intrachain disulfides connect Cys4–Cys15, Cys32–Cys129, and Cys104–Cys121.

It belongs to the snaclec family. In terms of assembly, heterotetramer of the subunits alpha, alpha', beta and beta'; disulfide-linked. Expressed by the venom gland.

Its subcellular location is the secreted. In terms of biological role, potent platelet activator that aggregates platelets via both GPIbalpha (GP1BA) and GPVI (GP6). Induces a tyrosine phosphorylation profile in platelets that resembles this produced by collagen, involving the time dependent tyrosine phosphorylation of Fc receptor gamma chain (FCGR1A), phospholipase Cgamma2 (PLCG2), and LAT. This chain is Snaclec alboaggregin-A subunit alpha', found in Trimeresurus albolabris (White-lipped pit viper).